Reading from the N-terminus, the 187-residue chain is Alpha-D-galactose-binding lectin (187 aa).

Residues 1–37 (MTFAKQSCFNSIILLSIATSYFKIGHKISELGNRIEK) form the signal peptide. Position 39 is an N-acetylthreonine (Thr39). N-acetyl-alpha-D-galactosamine contacts are provided by residues 53–56 (HPKG), Asp64, 72–76 (DIHER), His101, Gly104, Glu112, 120–122 (DRH), His145, Gly148, Glu156, and 164–166 (DKH).

As to quaternary structure, homodimer. Highest expression in the posterior part of the mantle. Highly expressed in gills and to a lesser extent in mid mantle and anterior muscle. Lowest expression in digestive gland and posterior adductor muscle. Scarcely detectable in hemocytes.

Agglutination of E.coli is inhibited by alpha-galactoside melibiose, but not by beta-galactoside lactose. Functionally, alpha-D-galactose-binding lectin. Binds D-GalNAc, but not glucose or its derivatives. Has hemagglutinating activity towards rabbit erythrocytes. Agglutinates bacteria. Has bacteriostatic activity on both Gram-positive and Gram-negative bacteria including B.subtilis, S.aureus, E.coli and V.parahaemolyticus, respectively. Has a dose-dependent cytotoxic effect on the human globotriaosylceramide (Gb3)-expressing Epstein-Barr virus (EBV)-positive Burkitt's lymphoma (Raji) cell line. Has dose-dependent cytotoxic effect on another Burkitt's lymphoma (Ramos) cell line, which does not possess the EBV genome, but also expresses Gb3. Binds to Gb3 in these cells leading to phosphorylation of MEK1/2, ERK1/2, JNK and p38 kinase, activation of caspase-9/3 and to expression of p21 and tumor necrosis factor (TNF)-alpha. No cytotoxic effect on the human chronic myelogenous leukemia (K-562) cell line, which does not express Gb3. May be involved in innate immunity acting as an antibacterial or antifungal agent. May be a pattern recognition receptor (PRR) involved in recognition of glycans found on parasitic or symbiotic microorganisms. The protein is Alpha-D-galactose-binding lectin of Mytilus galloprovincialis (Mediterranean mussel).